A 661-amino-acid chain; its full sequence is PAN2-PAN3 deadenylation complex subunit PAN3 (661 aa).

2 disordered regions span residues 1–26 and 53–130; these read MASA…AREN and DPHK…LRQD. The C3H1-type zinc-finger motif lies at 26 to 55; that stretch reads NAKDTLCRNITIYGRCRYEDKGCAFNHDPH. The segment covering 75-102 has biased composition (low complexity); the sequence is SFTPSLLSSNGSSPTSTPATTKKMTTIS. Over residues 115-130 the composition is skewed to polar residues; sequence SVVSRSNASTPGLRQD. The pseudokinase domain stretch occupies residues 263–524; it reads QTLPNTQLPA…NIDIFITGIS (262 aa). Residues Arg315, 364-371, and 424-425 contribute to the ATP site; these read DYHPLSKT and SK. Residues 525-563 adopt a coiled-coil conformation; it reads SQLMSTFDSALHLDDQLTSDLSRELENGRLVRLMTKLNF. The interval 564–661 is knob domain; sequence VNERPEYEHD…ALMKPARRMH (98 aa).

The protein belongs to the protein kinase superfamily. PAN3 family. As to quaternary structure, homodimer. Forms a heterotrimer with a catalytic subunit pan2 to form the poly(A)-nuclease (PAN) deadenylation complex. Interacts (via PAM-2 motif) with poly(A)-binding protein pab1 (via PABC domain), conferring substrate specificity of the enzyme complex.

The protein resides in the cytoplasm. Functionally, regulatory subunit of the poly(A)-nuclease (PAN) deadenylation complex, one of two cytoplasmic mRNA deadenylases involved in mRNA turnover. PAN specifically shortens poly(A) tails of RNA and the activity is stimulated by poly(A)-binding protein pab1. PAN deadenylation is followed by rapid degradation of the shortened mRNA tails by the CCR4-NOT complex. Deadenylated mRNAs are then degraded by two alternative mechanisms, namely exosome-mediated 3'-5' exonucleolytic degradation, or deadenylation-dependent mRNA decaping and subsequent 5'-3' exonucleolytic degradation by xrn1. May also be involved in post-transcriptional maturation of mRNA poly(A) tails. pan3 acts as a positive regulator for PAN activity, recruiting the catalytic subunit pan2 to mRNA via its interaction with RNA and with pab1. The polypeptide is PAN2-PAN3 deadenylation complex subunit PAN3 (Neosartorya fischeri (strain ATCC 1020 / DSM 3700 / CBS 544.65 / FGSC A1164 / JCM 1740 / NRRL 181 / WB 181) (Aspergillus fischerianus)).